The chain runs to 500 residues: Aldehyde dehydrogenase, mitochondrial (500 aa).

Lys35, Lys56, and Lys142 each carry N6-acetyllysine. NAD(+) is bound at residue 245-250 (GSTEVG). Glu268 (proton acceptor) is an active-site residue. Residue Cys302 is the Nucleophile of the active site. An N6-acetyllysine mark is found at Lys358, Lys366, Lys409, Lys411, Lys424, and Lys434.

The protein belongs to the aldehyde dehydrogenase family. In terms of assembly, homotetramer. Post-translationally, in response to mitochondrial stress, the precursor protein is ubiquitinated by the SIFI complex in the cytoplasm before mitochondrial import, leading to its degradation. Within the SIFI complex, UBR4 initiates ubiquitin chain that are further elongated or branched by KCMF1.

The protein localises to the mitochondrion matrix. The enzyme catalyses an aldehyde + NAD(+) + H2O = a carboxylate + NADH + 2 H(+). It functions in the pathway alcohol metabolism; ethanol degradation; acetate from ethanol: step 2/2. Functionally, required for clearance of cellular formaldehyde, a cytotoxic and carcinogenic metabolite that induces DNA damage. In Equus caballus (Horse), this protein is Aldehyde dehydrogenase, mitochondrial (ALDH2).